Here is a 458-residue protein sequence, read N- to C-terminus: uncharacterized protein (458 aa).

12 helical membrane passes run 26–46 (LIAIGGAIGTGLFLGSGKSIH), 47–67 (FAGPSILFAYMITGIICFLIM), 95–115 (AAFITGWTYWFCWISIAMADL), 125–145 (WLPGVPQWVPGLIALIILLIM), 160–180 (FALIKVIAILALIVIGLVMIF), 208–228 (GFILSFQMVVFAFVGIELVGL), 251–271 (VLLFYIGALLVIMSIYPWDII), 278–298 (FVQVFVAVGIVGAASIINFVV), 342–362 (ALFFSAIVILIGVTLNYIMPE), 365–385 (FTLITSISTVCFIYIWGITVI), 409–429 (PFTNYLILAFLAFVLVVLALA), and 432–452 (TRVSLFVTPVWFILLIVIYKV).

The protein belongs to the amino acid-polyamine-organocation (APC) superfamily.

It localises to the cell membrane. Probable amino-acid or metabolite transport protein. This is an uncharacterized protein from Bacillus subtilis (strain 168).